An 827-amino-acid chain; its full sequence is Probable beta-glucosidase H (827 aa).

Aspartate 223 is an active-site residue. The 160-residue stretch at 387–546 folds into the PA14 domain; that stretch reads RLLTNAVMHF…DSAEMVRSAV (160 aa). N-linked (GlcNAc...) asparagine glycans are attached at residues asparagine 471, asparagine 594, asparagine 600, and asparagine 625.

This sequence belongs to the glycosyl hydrolase 3 family.

The protein resides in the secreted. It carries out the reaction Hydrolysis of terminal, non-reducing beta-D-glucosyl residues with release of beta-D-glucose.. It functions in the pathway glycan metabolism; cellulose degradation. Its function is as follows. Beta-glucosidases are one of a number of cellulolytic enzymes involved in the degradation of cellulosic biomass. Catalyzes the last step releasing glucose from the inhibitory cellobiose. The sequence is that of Probable beta-glucosidase H (bglH) from Aspergillus oryzae (strain ATCC 42149 / RIB 40) (Yellow koji mold).